The sequence spans 57 residues: MNSEELTHKAEEEIAALISKKVAELRKKTGQEVSEIEFAPRETMKGLEGYHVKIKLL.

Belongs to the gns family.

This is Protein gns (gns) from Salmonella typhi.